Consider the following 410-residue polypeptide: Multifunctional CCA protein (410 aa).

Positions 8 and 11 each coordinate ATP. CTP is bound by residues Gly8 and Arg11. 2 residues coordinate Mg(2+): Asp21 and Asp23. ATP is bound by residues Arg91, Arg138, and Arg141. The CTP site is built by Arg91, Arg138, and Arg141. Residues 229 to 347 (TGIHQEMVSD…AQLALVCEAD (119 aa)) enclose the HD domain.

This sequence belongs to the tRNA nucleotidyltransferase/poly(A) polymerase family. Bacterial CCA-adding enzyme type 1 subfamily. In terms of assembly, monomer. Can also form homodimers and oligomers. Requires Mg(2+) as cofactor. Ni(2+) serves as cofactor.

It carries out the reaction a tRNA precursor + 2 CTP + ATP = a tRNA with a 3' CCA end + 3 diphosphate. The catalysed reaction is a tRNA with a 3' CCA end + 2 CTP + ATP = a tRNA with a 3' CCACCA end + 3 diphosphate. Its function is as follows. Catalyzes the addition and repair of the essential 3'-terminal CCA sequence in tRNAs without using a nucleic acid template. Adds these three nucleotides in the order of C, C, and A to the tRNA nucleotide-73, using CTP and ATP as substrates and producing inorganic pyrophosphate. tRNA 3'-terminal CCA addition is required both for tRNA processing and repair. Also involved in tRNA surveillance by mediating tandem CCA addition to generate a CCACCA at the 3' terminus of unstable tRNAs. While stable tRNAs receive only 3'-terminal CCA, unstable tRNAs are marked with CCACCA and rapidly degraded. This chain is Multifunctional CCA protein, found in Xanthomonas oryzae pv. oryzae (strain MAFF 311018).